Here is a 1102-residue protein sequence, read N- to C-terminus: WD repeat-containing protein 72 (1102 aa).

8 WD repeats span residues 15 to 54 (APPH…KISA), 60 to 102 (GHSA…CMEK), 160 to 197 (NCMC…NSIQ), 318 to 362 (KEQS…VSKF), 402 to 441 (AGTA…KARL), 459 to 504 (GHHQ…ILHK), 507 to 552 (LEAG…CLLH), and 555 to 594 (KHLF…LERH). 2 positions are modified to phosphoserine: Ser-1081 and Ser-1083.

The protein resides in the cytoplasmic vesicle. In terms of biological role, plays a major role in formation of tooth enamel. Specifically required during the maturation phase of amelogenesis for normal formation of the enamel matrix and clearance of enamel proteins. May be involved in localization of the calcium transporter SLC24A4 to the ameloblast cell membrane. The polypeptide is WD repeat-containing protein 72 (WDR72) (Homo sapiens (Human)).